Here is a 156-residue protein sequence, read N- to C-terminus: Small ribosomal subunit protein uS7 (156 aa).

It belongs to the universal ribosomal protein uS7 family. In terms of assembly, part of the 30S ribosomal subunit. Contacts proteins S9 and S11.

Functionally, one of the primary rRNA binding proteins, it binds directly to 16S rRNA where it nucleates assembly of the head domain of the 30S subunit. Is located at the subunit interface close to the decoding center, probably blocks exit of the E-site tRNA. The chain is Small ribosomal subunit protein uS7 from Dehalococcoides mccartyi (strain ATCC BAA-2100 / JCM 16839 / KCTC 5957 / BAV1).